Consider the following 487-residue polypeptide: Cysteine--tRNA ligase (487 aa).

Residue cysteine 27 coordinates Zn(2+). The short motif at 29-39 (ATVQGLPHVGH) is the 'HIGH' region element. The segment at 174–194 (IDDMQGAPDADPRGKKDPRDF) is disordered. Over residues 183 to 194 (ADPRGKKDPRDF) the composition is skewed to basic and acidic residues. Positions 225, 250, and 254 each coordinate Zn(2+). The 'KMSKS' region signature appears at 281–285 (KMSKS). Residue lysine 284 participates in ATP binding.

The protein belongs to the class-I aminoacyl-tRNA synthetase family. Monomer. It depends on Zn(2+) as a cofactor.

The protein localises to the cytoplasm. It carries out the reaction tRNA(Cys) + L-cysteine + ATP = L-cysteinyl-tRNA(Cys) + AMP + diphosphate. The polypeptide is Cysteine--tRNA ligase (Arthrobacter sp. (strain FB24)).